The sequence spans 160 residues: Peptide methionine sulfoxide reductase MsrA (160 aa).

C11 is an active-site residue.

Belongs to the MsrA Met sulfoxide reductase family.

The enzyme catalyses L-methionyl-[protein] + [thioredoxin]-disulfide + H2O = L-methionyl-(S)-S-oxide-[protein] + [thioredoxin]-dithiol. The catalysed reaction is [thioredoxin]-disulfide + L-methionine + H2O = L-methionine (S)-S-oxide + [thioredoxin]-dithiol. Has an important function as a repair enzyme for proteins that have been inactivated by oxidation. Catalyzes the reversible oxidation-reduction of methionine sulfoxide in proteins to methionine. This Malacoplasma penetrans (strain HF-2) (Mycoplasma penetrans) protein is Peptide methionine sulfoxide reductase MsrA.